Reading from the N-terminus, the 687-residue chain is MDQHQHLNKTAESASSEKKKTRRCNGFKMFLAALSFSYIAKALGGIIMKISITQIERRFDISSSLAGLIDGSFEIGNLLVIVFVSYFGSKLHRPKLIGIGCLLMGTGSILTSLPHFFMGYYRYSKETNIDPSENSTSNLPNCLINQMLSLNRTPSEIIERGCVKESGSHMWIYVFMGNMLRGIGETPIVPLGISYIDDFAKEGHSSLYLGTVNVMGMTGLVFAFMLGSLFAKMYVDIGYVDLSTIRITPKDSRWVGAWWLGFLVSGIVSIISSIPFFFLPLNPNKPQKERKVSLFLHVLKTNDKRNQIANLTNRRKYITKNVTGFFQSLKSILTNPLYVIFVIFTLLHMSSYIASLTYIIKMVEQQYGWSASKTNFLLGVLALPAVAIGMFSGGYIIKKFKLSLVGLAKLAFCSATVHLLSQVLYFFLICESKSVAGLTLTYDGNSPVRSHVDVPLSYCNSECNCDESQWEPVCGNNGITYLSPCLAGCKSSSGNKEPIVFYNCSCVEVIGLQNKNYSAHLGECPRDDACTRKSYVYFVIQVLDAFLCAVGLTSYSVLVIRIVQPELKALAIGFHSMIMRSLGGILVPIYFGALIDTTCMKWSTNSCGARGACRIYNSTYLGRAFFGLKVALIFPVLVLLTVFIFVVRKKSHGKDTKVLENERQVMDEANLEFLNDSEHFVPSAEEQ.

The Cytoplasmic portion of the chain corresponds to 1–29 (MDQHQHLNKTAESASSEKKKTRRCNGFKM). A helical transmembrane segment spans residues 30–50 (FLAALSFSYIAKALGGIIMKI). Residues 51 to 63 (SITQIERRFDISS) are Extracellular-facing. A helical membrane pass occupies residues 64–84 (SLAGLIDGSFEIGNLLVIVFV). The Cytoplasmic segment spans residues 85 to 96 (SYFGSKLHRPKL). The chain crosses the membrane as a helical span at residues 97-117 (IGIGCLLMGTGSILTSLPHFF). Residues 118–170 (MGYYRYSKETNIDPSENSTSNLPNCLINQMLSLNRTPSEIIERGCVKESGSHM) are Extracellular-facing. 2 N-linked (GlcNAc...) asparagine glycosylation sites follow: asparagine 134 and asparagine 151. The chain crosses the membrane as a helical span at residues 171–191 (WIYVFMGNMLRGIGETPIVPL). The Cytoplasmic segment spans residues 192–206 (GISYIDDFAKEGHSS). A helical membrane pass occupies residues 207–227 (LYLGTVNVMGMTGLVFAFMLG). The Extracellular portion of the chain corresponds to 228 to 258 (SLFAKMYVDIGYVDLSTIRITPKDSRWVGAW). A helical transmembrane segment spans residues 259–279 (WLGFLVSGIVSIISSIPFFFL). The Cytoplasmic portion of the chain corresponds to 280 to 339 (PLNPNKPQKERKVSLFLHVLKTNDKRNQIANLTNRRKYITKNVTGFFQSLKSILTNPLYV). A helical transmembrane segment spans residues 340–360 (IFVIFTLLHMSSYIASLTYII). The Extracellular portion of the chain corresponds to 361 to 376 (KMVEQQYGWSASKTNF). A helical membrane pass occupies residues 377 to 397 (LLGVLALPAVAIGMFSGGYII). The Cytoplasmic segment spans residues 398–409 (KKFKLSLVGLAK). The helical transmembrane segment at 410-430 (LAFCSATVHLLSQVLYFFLIC) threads the bilayer. Residues 431–539 (ESKSVAGLTL…CTRKSYVYFV (109 aa)) are Extracellular-facing. The 56-residue stretch at 453-508 (DVPLSYCNSECNCDESQWEPVCGNNGITYLSPCLAGCKSSSGNKEPIVFYNCSCVE) folds into the Kazal-like domain. Cystine bridges form between cysteine 459/cysteine 489, cysteine 465/cysteine 485, and cysteine 474/cysteine 506. Residues asparagine 503 and asparagine 516 are each glycosylated (N-linked (GlcNAc...) asparagine). A helical membrane pass occupies residues 540 to 560 (IQVLDAFLCAVGLTSYSVLVI). Topologically, residues 561–568 (RIVQPELK) are cytoplasmic. The chain crosses the membrane as a helical span at residues 569-589 (ALAIGFHSMIMRSLGGILVPI). Over 590–624 (YFGALIDTTCMKWSTNSCGARGACRIYNSTYLGRA) the chain is Extracellular. A glycan (N-linked (GlcNAc...) asparagine) is linked at asparagine 617. The helical transmembrane segment at 625 to 645 (FFGLKVALIFPVLVLLTVFIF) threads the bilayer. Over 646-687 (VVRKKSHGKDTKVLENERQVMDEANLEFLNDSEHFVPSAEEQ) the chain is Cytoplasmic.

This sequence belongs to the organo anion transporter (TC 2.A.60) family. As to expression, expressed in the perivenular areas (centrilobular) of the liver (at protein level).

It localises to the smooth endoplasmic reticulum membrane. The protein resides in the cell membrane. Its subcellular location is the endoplasmic reticulum membrane. It catalyses the reaction 17beta-estradiol 17-O-(beta-D-glucuronate)(out) = 17beta-estradiol 17-O-(beta-D-glucuronate)(in). The enzyme catalyses dehydroepiandrosterone 3-sulfate(out) = dehydroepiandrosterone 3-sulfate(in). The catalysed reaction is taurocholate(out) = taurocholate(in). It carries out the reaction lithocholate(out) = lithocholate(in). With respect to regulation, transport activity is induced by farnesoid X receptor (FXR) agonists such as chenodeoxycholate. Its function is as follows. Mediates the Na(+)-independent uptake of organic anions. Transports the conjugated steroids 17-beta-glucuronosyl estradiol (17beta-estradiol 17-O-(beta-D-glucuronate) or E2G) and dehydroepiandrosterone 3-sulfate (DHEAS) at the smooth endoplasmic reticulum membrane (SER), granting access to metabolizing enzymes. Contributes to the metabolism of bile acids such as taurocholate (cholyltaurine) and lithocholate, by functioning as a doorway between SER and cytosol, thereby decreasing their circulating levels and protecting the organism from their detergent properties. Regulates access or exit of drugs to the SER lumen. This is SLCO1B3-SLCO1B7 readthrough transcript protein from Homo sapiens (Human).